The primary structure comprises 268 residues: Very-long-chain aldehyde decarbonylase GL1-8 (268 aa).

The next 4 helical transmembrane spans lie at 26–46 (IGTF…SLLF), 70–90 (CVVR…ILSY), 107–127 (WTVV…IFYW), and 164–184 (ILFL…HLFT). The region spanning 114–249 (VLFFFVLEDF…FIYMDWLFGT (136 aa)) is the Fatty acid hydroxylase domain.

This sequence belongs to the sterol desaturase family. In terms of assembly, homodimer.

Its subcellular location is the endoplasmic reticulum membrane. The catalysed reaction is a long-chain fatty aldehyde + 2 NADPH + O2 + H(+) = a long-chain alkane + formate + 2 NADP(+) + H2O. In terms of biological role, aldehyde decarbonylase involved in the conversion of aldehydes to alkanes. Core component of a very-long-chain alkane synthesis complex. The sequence is that of Very-long-chain aldehyde decarbonylase GL1-8 from Oryza sativa subsp. indica (Rice).